The chain runs to 268 residues: Acidic leucine-rich nuclear phosphoprotein 32 family member E (268 aa).

An N-acetylmethionine modification is found at Met-1. LRR repeat units follow at residues 18 to 38 (EVTE…EGLN), 43 to 64 (ELEF…PSLN), 65 to 87 (KLRK…AEKC), and 89 to 110 (NLTY…EALQ). A Glycyl lysine isopeptide (Lys-Gly) (interchain with G-Cter in SUMO2) cross-link involves residue Lys-68. One can recognise an LRRCT domain in the interval 123 to 161 (CEITNLEDYRESIFELLQQITYLDGFDQEDNEAPDSEEE). Composition is skewed to acidic residues over residues 149–216 (DQED…EEEV) and 226–247 (IQDE…EEEE). The disordered stretch occupies residues 149-268 (DQEDNEAPDS…AEDDGEEEDD (120 aa)). Residues 215–268 (EVGLSYLMKEEIQDEEDDDDYVEEGEEEEEEEEGGLRGEKRKRDAEDDGEEEDD) form a ZID domain region. Residues 248–259 (GGLRGEKRKRDA) are compositionally biased toward basic and acidic residues.

This sequence belongs to the ANP32 family. In terms of assembly, interacts with the importin alpha KPNA1 and KPNA2. Component of a SWR1-like complex, composed of EP400, KAT5/TIP60, TRRAP, BRD8, RUVBL1, RUVBL2, ING3 and ANP32E; the complex does not contain SRCAP. Interacts with H2A.Z/H2AZ1. Post-translationally, phosphorylated. The phosphorylation is nuclear localization signal (NLS)-dependent. In terms of tissue distribution, expressed in peripheral blood leukocytes, colon, small intestine, prostate, thymus, spleen, skeletal muscle, liver and kidney.

It is found in the cytoplasm. The protein resides in the nucleus. Its function is as follows. Histone chaperone that specifically mediates the genome-wide removal of histone H2A.Z/H2AZ1 from the nucleosome: removes H2A.Z/H2AZ1 from its normal sites of deposition, especially from enhancer and insulator regions. Not involved in deposition of H2A.Z/H2AZ1 in the nucleosome. May stabilize the evicted H2A.Z/H2AZ1-H2B dimer, thus shifting the equilibrium towards dissociation and the off-chromatin state. Inhibits activity of protein phosphatase 2A (PP2A). Does not inhibit protein phosphatase 1. May play a role in cerebellar development and synaptogenesis. The chain is Acidic leucine-rich nuclear phosphoprotein 32 family member E (ANP32E) from Homo sapiens (Human).